Here is a 1661-residue protein sequence, read N- to C-terminus: Pentafunctional AROM polypeptide (1661 aa).

The 3-dehydroquinate synthase stretch occupies residues 1–388 (MATNGVKAEP…YEKKASSVVD (388 aa)). NAD(+) contacts are provided by residues 50–52 (DTN), 87–90 (ETSK), 118–120 (GGV), and Asp-123. Residue Arg-134 participates in 7-phospho-2-dehydro-3-deoxy-D-arabino-heptonate binding. 143 to 144 (TT) provides a ligand contact to NAD(+). Asp-150 and Lys-156 together coordinate 7-phospho-2-dehydro-3-deoxy-D-arabino-heptonate. Lys-165 serves as a coordination point for NAD(+). Asn-166 provides a ligand contact to 7-phospho-2-dehydro-3-deoxy-D-arabino-heptonate. NAD(+) contacts are provided by residues 183–186 (FLET) and Asn-194. Glu-198 lines the Zn(2+) pocket. Residues 198 to 201 (EVVK) and Lys-254 contribute to the 7-phospho-2-dehydro-3-deoxy-D-arabino-heptonate site. Glu-264 serves as the catalytic Proton acceptor; for 3-dehydroquinate synthase activity. 7-phospho-2-dehydro-3-deoxy-D-arabino-heptonate is bound by residues 268–272 (RNLLN) and His-275. Residue His-275 coordinates Zn(2+). Catalysis depends on His-279, which acts as the Proton acceptor; for 3-dehydroquinate synthase activity. Residues His-291 and Lys-360 each coordinate 7-phospho-2-dehydro-3-deoxy-D-arabino-heptonate. His-291 contributes to the Zn(2+) binding site. An EPSP synthase region spans residues 401–850 (VHPGIPSDLN…WDILNQQFKA (450 aa)). Residue Cys-832 is the For EPSP synthase activity of the active site. The tract at residues 872–1064 (QKSIFIIGMR…KKKKQSFFVC (193 aa)) is shikimate kinase. 879–886 (GMRGAGKT) lines the ATP pocket. The 3-dehydroquinase stretch occupies residues 1065–1285 (LSAPNLEPCA…TAPGQLSAAD (221 aa)). His-1188 serves as the catalytic Proton acceptor; for 3-dehydroquinate dehydratase activity. The active-site Schiff-base intermediate with substrate; for 3-dehydroquinate dehydratase activity is the Lys-1216. Residues 1298–1661 (TKKFCIFGSP…LTYSWSLGDW (364 aa)) form a shikimate dehydrogenase region.

It in the N-terminal section; belongs to the sugar phosphate cyclases superfamily. Dehydroquinate synthase family. The protein in the 2nd section; belongs to the EPSP synthase family. This sequence in the 3rd section; belongs to the shikimate kinase family. In the 4th section; belongs to the type-I 3-dehydroquinase family. It in the C-terminal section; belongs to the shikimate dehydrogenase family. As to quaternary structure, homodimer. It depends on Zn(2+) as a cofactor.

Its subcellular location is the cytoplasm. The enzyme catalyses 7-phospho-2-dehydro-3-deoxy-D-arabino-heptonate = 3-dehydroquinate + phosphate. The catalysed reaction is 3-dehydroquinate = 3-dehydroshikimate + H2O. It catalyses the reaction shikimate + NADP(+) = 3-dehydroshikimate + NADPH + H(+). It carries out the reaction shikimate + ATP = 3-phosphoshikimate + ADP + H(+). The enzyme catalyses 3-phosphoshikimate + phosphoenolpyruvate = 5-O-(1-carboxyvinyl)-3-phosphoshikimate + phosphate. Its pathway is metabolic intermediate biosynthesis; chorismate biosynthesis; chorismate from D-erythrose 4-phosphate and phosphoenolpyruvate: step 2/7. The protein operates within metabolic intermediate biosynthesis; chorismate biosynthesis; chorismate from D-erythrose 4-phosphate and phosphoenolpyruvate: step 3/7. It participates in metabolic intermediate biosynthesis; chorismate biosynthesis; chorismate from D-erythrose 4-phosphate and phosphoenolpyruvate: step 4/7. It functions in the pathway metabolic intermediate biosynthesis; chorismate biosynthesis; chorismate from D-erythrose 4-phosphate and phosphoenolpyruvate: step 5/7. Its pathway is metabolic intermediate biosynthesis; chorismate biosynthesis; chorismate from D-erythrose 4-phosphate and phosphoenolpyruvate: step 6/7. Its function is as follows. The AROM polypeptide catalyzes 5 consecutive enzymatic reactions in prechorismate polyaromatic amino acid biosynthesis. In Phaeosphaeria nodorum (strain SN15 / ATCC MYA-4574 / FGSC 10173) (Glume blotch fungus), this protein is Pentafunctional AROM polypeptide.